Consider the following 343-residue polypeptide: Squamosa promoter-binding-like protein 11 (343 aa).

Positions 1–48 are disordered; sequence MECNPVSSTTSSSLLWDWDATASAEPPPPPGKRGGRDSSSASASAKRG. 2 stretches are compositionally biased toward low complexity: residues 7–19 and 37–48; these read SSTT…WDWD and DSSSASASAKRG. An SBP-type zinc finger spans residues 64 to 141; sequence APRCQVEGCG…SDHNARRRKP (78 aa). Cysteine 67, cysteine 72, cysteine 89, histidine 92, cysteine 108, cysteine 111, histidine 115, and cysteine 127 together coordinate Zn(2+). Residues 124-140 carry the Bipartite nuclear localization signal motif; the sequence is KRSCRRRLSDHNARRRK.

As to expression, expressed in stems, leaf sheaths, and young panicles.

The protein localises to the nucleus. Functionally, trans-acting factor that binds specifically to the consensus nucleotide sequence 5'-TNCGTACAA-3'. May be involved in panicle development. The polypeptide is Squamosa promoter-binding-like protein 11 (SPL11) (Oryza sativa subsp. japonica (Rice)).